We begin with the raw amino-acid sequence, 318 residues long: MRKSGCAVCSRSIGWVGLAVSTVLMVMKAFVGLIGGSQAMLADAMYSLKDMLNALMVIIGTTISSKPLDAEHPYGHGKVEFILSMVVSVVFIVLTGYLLVHAVQILLDESLHRTPHLIVLWAALVSIGVNVGMYFYSRCVAIETNSPLIKTMAKHHHGDATASGAVALGIIGAHYLNMPWIDPAVALWETIDLLLLGKVVFMDAYRGLMDHTAGEAVQNRIVEAAERVPGVRGVIHLRARYVGQDIWADMIIGVDPENTVEQAHEICEAVQAAVCGKIRRIESLHVSAEAREIGDTTKPSFSDQPLSFDEVMLSKVDN.

Residues methionine 1–aspartate 210 form a transmembrane domain (TMD) region. 4 helical membrane-spanning segments follow: residues isoleucine 13–leucine 33, alanine 39–isoleucine 59, phenylalanine 81–histidine 101, and leucine 117–serine 137. Residues histidine 211 to asparagine 318 form a C-terminal domain (CTD) region. Fe cation is bound by residues aspartate 249, histidine 264, histidine 285, and glutamate 289.

Belongs to the cation diffusion facilitator (CDF) transporter (TC 2.A.4) family. As to quaternary structure, forms homodimers via its C-terminal domain (CTD) in the presence of metal cations. Interacts with MamB via their CTD. Isolated CTD forms homodimers.

The protein localises to the magnetosome membrane. The protein resides in the cell inner membrane. In terms of biological role, essential for magnetosome formation; required for stable accumulation of MamB. May nucleate iron crystal formation. Probably binds and transports iron. Binds divalent cations, possibly up to 3 Zn(2+) per dimer in vitro, probably iron in vivo. One of 7 genes (mamLQBIEMO) able to induce magnetosome membrane biogenesis; coexpression of mamLQRBIEMO in a deletion of the 17 gene mamAB operon restores magnetosome vesicle formation but not magnetite biosynthesis. The sequence is that of Magnetosome protein MamM from Magnetospirillum gryphiswaldense (strain DSM 6361 / JCM 21280 / NBRC 15271 / MSR-1).